The sequence spans 71 residues: Putative membrane protein insertion efficiency factor (71 aa).

Belongs to the UPF0161 family.

Its subcellular location is the cell membrane. In terms of biological role, could be involved in insertion of integral membrane proteins into the membrane. The polypeptide is Putative membrane protein insertion efficiency factor (Clostridium acetobutylicum (strain ATCC 824 / DSM 792 / JCM 1419 / IAM 19013 / LMG 5710 / NBRC 13948 / NRRL B-527 / VKM B-1787 / 2291 / W)).